The primary structure comprises 169 residues: Phosphopantetheine adenylyltransferase (169 aa).

A substrate-binding site is contributed by Thr13. ATP is bound by residues 13-14 (TF) and His21. Substrate is bound by residues Lys45, Leu82, and Arg96. Residues 97-99 (GLR), Glu107, and 132-138 (HQFISSR) each bind ATP.

This sequence belongs to the bacterial CoaD family. Homohexamer. The cofactor is Mg(2+).

The protein localises to the cytoplasm. The catalysed reaction is (R)-4'-phosphopantetheine + ATP + H(+) = 3'-dephospho-CoA + diphosphate. It participates in cofactor biosynthesis; coenzyme A biosynthesis; CoA from (R)-pantothenate: step 4/5. Its function is as follows. Reversibly transfers an adenylyl group from ATP to 4'-phosphopantetheine, yielding dephospho-CoA (dPCoA) and pyrophosphate. The sequence is that of Phosphopantetheine adenylyltransferase from Acidiphilium cryptum (strain JF-5).